Reading from the N-terminus, the 245-residue chain is Ribosomal RNA large subunit methyltransferase E (245 aa).

Residues glycine 83, tryptophan 85, aspartate 111, aspartate 127, and aspartate 156 each coordinate S-adenosyl-L-methionine. The Proton acceptor role is filled by lysine 196.

Belongs to the class I-like SAM-binding methyltransferase superfamily. RNA methyltransferase RlmE family.

It localises to the cytoplasm. The enzyme catalyses uridine(2552) in 23S rRNA + S-adenosyl-L-methionine = 2'-O-methyluridine(2552) in 23S rRNA + S-adenosyl-L-homocysteine + H(+). Its function is as follows. Specifically methylates the uridine in position 2552 of 23S rRNA at the 2'-O position of the ribose in the fully assembled 50S ribosomal subunit. In Polaromonas naphthalenivorans (strain CJ2), this protein is Ribosomal RNA large subunit methyltransferase E.